The chain runs to 255 residues: Methanethiol S-methyltransferase (255 aa).

The next 5 helical transmembrane spans lie at 16–36, 56–76, 99–119, 131–151, and 191–211; these read FVLLYGVFCYFTFLLTCVYAV, LVTALLIDVGLLGIFALQHSV, YVLFSSLALMLVFWQWHPIGI, IIFYSLFALGWVIVLVSTFLI, and VGWFLVFWMTPIMTVAHLVFA.

The protein belongs to the nurim family.

It localises to the membrane. It carries out the reaction methanethiol + S-adenosyl-L-methionine = dimethyl sulfide + S-adenosyl-L-homocysteine + H(+). Functionally, catalyzes the methylation of methanethiol (MeSH) to yield dimethylsulphide (DMS). This is Methanethiol S-methyltransferase from Crocosphaera subtropica (strain ATCC 51142 / BH68) (Cyanothece sp. (strain ATCC 51142)).